We begin with the raw amino-acid sequence, 677 residues long: Methionine--tRNA ligase (677 aa).

Positions 14 to 24 (PYANGSIHLGH) match the 'HIGH' region motif. C145, C148, C158, and C161 together coordinate Zn(2+). Positions 331–335 (KMSKS) match the 'KMSKS' region motif. Position 334 (K334) interacts with ATP. Residues 575–677 (AFAAVDLRIA…SGAKPGQRVK (103 aa)) enclose the tRNA-binding domain.

Belongs to the class-I aminoacyl-tRNA synthetase family. MetG type 1 subfamily. Homodimer. Zn(2+) is required as a cofactor.

It localises to the cytoplasm. The enzyme catalyses tRNA(Met) + L-methionine + ATP = L-methionyl-tRNA(Met) + AMP + diphosphate. Its function is as follows. Is required not only for elongation of protein synthesis but also for the initiation of all mRNA translation through initiator tRNA(fMet) aminoacylation. This Pseudomonas aeruginosa (strain LESB58) protein is Methionine--tRNA ligase.